Consider the following 567-residue polypeptide: Protein ESMERALDA 1 (567 aa).

Residues 1–41 form a disordered region; it reads MLAKNRLPGSGHTTPSPPASPRRSPRYRHGRSKAAAGSRFP. Residues 1-65 are Cytoplasmic-facing; it reads MLAKNRLPGS…ILLSVLLRRQ (65 aa). A compositionally biased stretch (basic residues) spans 23-32; sequence RSPRYRHGRS. The helical; Signal-anchor for type II membrane protein transmembrane segment at 66–86 threads the bilayer; it reads GIFLFAPLIYISCMLLYMGTV. At 87 to 567 the chain is on the lumenal side; it reads SFDVVPIIQR…TPESRPPPAT (481 aa). Asn-121, Asn-145, Asn-184, and Asn-238 each carry an N-linked (GlcNAc...) asparagine glycan. A substrate-binding site is contributed by 331–333; sequence HLR. N-linked (GlcNAc...) asparagine glycans are attached at residues Asn-403, Asn-419, Asn-449, Asn-538, and Asn-554.

Belongs to the glycosyltransferase GT106 family. As to expression, ubiquitous.

The protein localises to the golgi apparatus membrane. The protein operates within protein modification; protein glycosylation. In terms of biological role, glycosyltransferase that plays a role in cell adhesion. The chain is Protein ESMERALDA 1 from Arabidopsis thaliana (Mouse-ear cress).